The chain runs to 268 residues: Interleukin-1 beta (268 aa).

The propeptide occupies 1–116 (MATVPELTSE…TWDDYSLECD (116 aa)).

This sequence belongs to the IL-1 family. Monomer. In its precursor form, weakly interacts with full-length MEFV; the mature cytokine does not interact at all. Interacts with integrins ITGAV:ITGBV and ITGA5:ITGB1; integrin-binding is required for IL1B signaling. Interacts with cargo receptor TMED10; the interaction is direct and is required for the secretion of IL1B mature form. Interacts with HSP90AB1; the interaction facilitates cargo translocation into the ERGIC. Interacts with HSP90B1; the interaction facilitates cargo translocation into the ERGIC.

The protein localises to the cytoplasm. The protein resides in the cytosol. It localises to the secreted. It is found in the lysosome. Its subcellular location is the extracellular exosome. Potent pro-inflammatory cytokine. Initially discovered as the major endogenous pyrogen, induces prostaglandin synthesis, neutrophil influx and activation, T-cell activation and cytokine production, B-cell activation and antibody production, and fibroblast proliferation and collagen production. Promotes Th17 differentiation of T-cells. Synergizes with IL12/interleukin-12 to induce IFNG synthesis from T-helper 1 (Th1) cells. Plays a role in angiogenesis by inducing VEGF production synergistically with TNF and IL6. Involved in transduction of inflammation downstream of pyroptosis: its mature form is specifically released in the extracellular milieu by passing through the gasdermin-D (GSDMD) pore. The chain is Interleukin-1 beta (IL1B) from Oryctolagus cuniculus (Rabbit).